A 431-amino-acid chain; its full sequence is MANSC domain-containing protein 1 (431 aa).

A signal peptide spans 1-26 (MFFGGEGSLTYTLVIICFLTLRLSAS). The Extracellular portion of the chain corresponds to 27-385 (QNCLKKSLED…QYGLPFEKWL (359 aa)). Residues 33 to 117 (SLEDVVIDIQ…LKPAKGLMSY (85 aa)) form the MANSC domain. Asparagine 72, asparagine 222, and asparagine 251 each carry an N-linked (GlcNAc...) asparagine glycan. The interval 234-277 (SPHTTSATPKPATLLPTNASVTPSGTSQPQLATTAPPVTTVTSQ) is disordered. Polar residues predominate over residues 248 to 261 (LPTNASVTPSGTSQ). A compositionally biased stretch (low complexity) spans 262–277 (PQLATTAPPVTTVTSQ). N-linked (GlcNAc...) asparagine glycans are attached at residues asparagine 327 and asparagine 352. The interval 352–372 (NKTASWEGREASPGSSSQGSV) is disordered. A helical membrane pass occupies residues 386-408 (LIGSLLFGVLFLVIGLVLLGRIL). The Cytoplasmic segment spans residues 409–431 (SESLRRKRYSRLDYLINGIYVDI).

As to expression, widely expressed.

It is found in the membrane. This chain is MANSC domain-containing protein 1 (MANSC1), found in Homo sapiens (Human).